The following is a 450-amino-acid chain: Glutamate--tRNA ligase 2 (450 aa).

Residues 10–20 (PSPTGFLHIGG) carry the 'HIGH' region motif. A 'KMSKS' region motif is present at residues 232 to 236 (KLSKR). K235 provides a ligand contact to ATP.

This sequence belongs to the class-I aminoacyl-tRNA synthetase family. Glutamate--tRNA ligase type 1 subfamily. In terms of assembly, monomer.

The protein localises to the cytoplasm. It carries out the reaction tRNA(Glu) + L-glutamate + ATP = L-glutamyl-tRNA(Glu) + AMP + diphosphate. Catalyzes the attachment of glutamate to tRNA(Glu) in a two-step reaction: glutamate is first activated by ATP to form Glu-AMP and then transferred to the acceptor end of tRNA(Glu). This chain is Glutamate--tRNA ligase 2, found in Wolbachia pipientis subsp. Culex pipiens (strain wPip).